The following is a 222-amino-acid chain: Pyridoxine/pyridoxamine 5'-phosphate oxidase (222 aa).

Residues R71 to K76, Y86 to T87, K93, and Q115 contribute to the FMN site. Residue K76 participates in substrate binding. The substrate site is built by Y133, R137, and S141. FMN contacts are provided by residues Q150 to S151 and W195. A substrate-binding site is contributed by R201 to H203. R205 contributes to the FMN binding site.

It belongs to the pyridoxamine 5'-phosphate oxidase family. As to quaternary structure, homodimer. It depends on FMN as a cofactor.

The enzyme catalyses pyridoxamine 5'-phosphate + O2 + H2O = pyridoxal 5'-phosphate + H2O2 + NH4(+). The catalysed reaction is pyridoxine 5'-phosphate + O2 = pyridoxal 5'-phosphate + H2O2. Its pathway is cofactor metabolism; pyridoxal 5'-phosphate salvage; pyridoxal 5'-phosphate from pyridoxamine 5'-phosphate: step 1/1. It participates in cofactor metabolism; pyridoxal 5'-phosphate salvage; pyridoxal 5'-phosphate from pyridoxine 5'-phosphate: step 1/1. Catalyzes the oxidation of either pyridoxine 5'-phosphate (PNP) or pyridoxamine 5'-phosphate (PMP) into pyridoxal 5'-phosphate (PLP). In Caulobacter vibrioides (strain ATCC 19089 / CIP 103742 / CB 15) (Caulobacter crescentus), this protein is Pyridoxine/pyridoxamine 5'-phosphate oxidase.